The primary structure comprises 516 residues: uncharacterized protein (516 aa).

Positions Met1–Thr17 are cleaved as a signal peptide. Disordered stretches follow at residues Lys29 to Arg197 and Arg296 to Leu426. The segment covering Arg71–Ser85 has biased composition (basic and acidic residues). Pro residues predominate over residues Val122–Ser144. Over residues Pro145 to Val155 the composition is skewed to low complexity. The segment covering Lys351–Pro367 has biased composition (basic and acidic residues). Over residues Ser394 to Pro406 the composition is skewed to low complexity. The span at Ala415–Leu426 shows a compositional bias: basic and acidic residues.

This is an uncharacterized protein from Treponema pallidum (strain Nichols).